A 326-amino-acid chain; its full sequence is G-protein coupled receptor 171 (326 aa).

At 1-19 (MTNSSMFCPIYRDLEPFTY) the chain is on the extracellular side. A helical membrane pass occupies residues 20–40 (FFYLVYLIGIIGSCFATWAFI). The Cytoplasmic segment spans residues 41–48 (QKSTNHRC). The helical transmembrane segment at 49–69 (VSIYLINLLTADFLLTLALPV) threads the bilayer. Over 70–89 (KIVVDLGVAPWKLRIFHCQV) the chain is Extracellular. Cysteine 87 and cysteine 165 are disulfide-bonded. A helical transmembrane segment spans residues 90 to 110 (TACLIYINMYLSIIFLAFVSI). Residues 111–133 (DRCLQLVHSCKIYRIQEPGFAKM) lie on the Cytoplasmic side of the membrane. The helical transmembrane segment at 134–154 (ISAVVWLMVLLIMVPNMVIPI) threads the bilayer. Residues 155 to 182 (KNIKEKSNVGCMEFKREFGKNWHLLTNF) lie on the Extracellular side of the membrane. The chain crosses the membrane as a helical span at residues 183-203 (ICVAIFLNFSAIILISNFLVI). Residues 204–221 (RQLYRNRDNANYPSVKSA) lie on the Cytoplasmic side of the membrane. A helical transmembrane segment spans residues 222-242 (LLNILLVTASYIICFVPYHAV). Residues 243–268 (RIPYTLSQTEVISDCSTRIALFKAKE) lie on the Extracellular side of the membrane. A helical membrane pass occupies residues 269-289 (ATLLLAVSNLCFDPILYYHLS). Residues 290-326 (KAFRLKVTETFASPQKMKAREEKPRRENDVQSTGSAC) are Cytoplasmic-facing. The disordered stretch occupies residues 305–326 (KMKAREEKPRRENDVQSTGSAC). A compositionally biased stretch (basic and acidic residues) spans 307-318 (KAREEKPRREND).

This sequence belongs to the G-protein coupled receptor 1 family.

The protein localises to the cell membrane. In terms of biological role, G-protein coupled receptor for Big LEN, a 16-amino acid neuropeptide produced from the precursor protein, proSAAS (encoded by PCSK1N). Acts through a G(i)-alpha-mediated pathway in response to Big LEN. Big LEN-GPR171 system plays an important role in regulating feeding and metabolism. Also plays a role in modulating fear and anxiety-like behaviors in the basolateral amygdala. Big LEN-GPR171 modulates the mu-type opioid receptor signaling and antinociception. Acts as a negative regulator T cell function. The sequence is that of G-protein coupled receptor 171 from Rattus norvegicus (Rat).